The primary structure comprises 416 residues: MSSAADFDPKPRRASIAVDVGGVIVGGGAPIVVQSMTNTDTADIDSTVAQVAALHRAGSELVRITVDRDESAAAVPKIRERLLRLGMDVPLIGDFHYIGHKLLADHPDCAAALAKYRINPGNVGFKDKKDKQFAEIIEMAIRYDKPVRIGVNWGSLDQDLLTALMDQNAAAGSPLSARQVTREAIVQSALLSAALAEEIGLPRNRIILSAKVSQVQDLIAVNSMLAERSNHALHLGLTEAGMGSKGIVASAAAMGFVLQHGIGDTIRVSLTPEPNGDRTREVQVAQEILQVMGFRQFVPVVAACPGCGRTTSTVFQELAQNIQNDIRKNMPVWREKYPGVEALNVAVMGCIVNGPGESKHADIGISLPGTGETPAAPVFIDGKKALTLRGPNIAADFEALVVDYIEKRFGQRTAAE.

Positions 304, 307, 350, and 357 each coordinate [4Fe-4S] cluster.

It belongs to the IspG family. [4Fe-4S] cluster is required as a cofactor.

The catalysed reaction is (2E)-4-hydroxy-3-methylbut-2-enyl diphosphate + oxidized [flavodoxin] + H2O + 2 H(+) = 2-C-methyl-D-erythritol 2,4-cyclic diphosphate + reduced [flavodoxin]. It functions in the pathway isoprenoid biosynthesis; isopentenyl diphosphate biosynthesis via DXP pathway; isopentenyl diphosphate from 1-deoxy-D-xylulose 5-phosphate: step 5/6. Functionally, converts 2C-methyl-D-erythritol 2,4-cyclodiphosphate (ME-2,4cPP) into 1-hydroxy-2-methyl-2-(E)-butenyl 4-diphosphate. This is 4-hydroxy-3-methylbut-2-en-1-yl diphosphate synthase (flavodoxin) from Rhizobium etli (strain CIAT 652).